Here is a 49-residue protein sequence, read N- to C-terminus: Large ribosomal subunit protein bL33B (49 aa).

The protein belongs to the bacterial ribosomal protein bL33 family.

This chain is Large ribosomal subunit protein bL33B, found in Bacillus cereus (strain ATCC 14579 / DSM 31 / CCUG 7414 / JCM 2152 / NBRC 15305 / NCIMB 9373 / NCTC 2599 / NRRL B-3711).